The following is a 489-amino-acid chain: Coronin-1B (489 aa).

Position 2 is a phosphoserine; by PKC (Ser2). WD repeat units follow at residues 18 to 72, 73 to 122, 123 to 166, 167 to 210, 211 to 256, and 257 to 296; these read QPVK…GRID, KAYP…SPLT, EPVV…GTAE, ELYR…RGTL, VAER…ENLE, and EPMALQELDSSNGALLPFYDPDTSVVYVCGKGDSSIRYFE. Residues 408–444 form a disordered region; the sequence is RRNVLSDSRPAMAPGSSHLGAPASTTTAADATPSGSL. Positions 428–441 are enriched in low complexity; the sequence is APASTTTAADATPS. The stretch at 449–474 forms a coiled coil; the sequence is EAGKLEEVMQELRALRALVKEQGDRI.

This sequence belongs to the WD repeat coronin family. In terms of assembly, forms homooligomers, but does not form complexes with the other coronins. Interacts with Arp2/3 complex components, including ACTR2, ARPC1B and ARPC2. Binds actin. In terms of processing, phosphorylation by PKC on Ser-2 regulates the interaction with the Arp2/3 complex and cell motility in fibroblasts. Phosphorylation does not seem to affect subcellular location.

It is found in the cytoplasm. The protein localises to the cytoskeleton. It localises to the stress fiber. Its function is as follows. Regulates leading edge dynamics and cell motility in fibroblasts. May be involved in cytokinesis and signal transduction. The protein is Coronin-1B (CORO1B) of Homo sapiens (Human).